Here is a 396-residue protein sequence, read N- to C-terminus: Non-homologous end joining protein Ku (396 aa).

The Ku domain occupies 9 to 189; it reads ISFGLVSIPV…DVAVRPQELS (181 aa). Residues 278 to 288 are compositionally biased toward low complexity; sequence DGDAGPAAAGV. The tract at residues 278–396 is disordered; sequence DGDAGPAAAG…SKTPPTRRSA (119 aa). The segment covering 294–312 has biased composition (basic and acidic residues); it reads DDKASDDKASDDKASDGRR. Residues 315 to 336 show a composition bias toward polar residues; sequence RTSSVKGASSAPGTRSTARKTP. The segment covering 337–396 has biased composition (low complexity); sequence SSTRSTAKTNAATKTPPAKTSAAKASAAKTSAAKATSSRTAPKTAPRTPTSKTPPTRRSA.

It belongs to the prokaryotic Ku family. In terms of assembly, homodimer. Interacts with LigD.

Its function is as follows. With LigD forms a non-homologous end joining (NHEJ) DNA repair enzyme, which repairs dsDNA breaks with reduced fidelity. Binds linear dsDNA with 5'- and 3'- overhangs but not closed circular dsDNA nor ssDNA. Recruits and stimulates the ligase activity of LigD. The sequence is that of Non-homologous end joining protein Ku from Frankia casuarinae (strain DSM 45818 / CECT 9043 / HFP020203 / CcI3).